Consider the following 123-residue polypeptide: Protein Wnt-3a (123 aa).

A lipid anchor (O-palmitoleoyl serine) is attached at serine 1. Cysteine 89 and cysteine 104 are oxidised to a cystine. Asparagine 90 carries N-linked (GlcNAc...) asparagine glycosylation.

Belongs to the Wnt family. Post-translationally, disulfide bonds have critical and distinct roles in secretion and activity. Loss of each conserved cysteine results in high molecular weight oxidized Wnt oligomers, which are formed through inter-Wnt disulfide bonding. Palmitoleoylation is required for efficient binding to frizzled receptors. Depalmitoleoylation leads to Wnt signaling pathway inhibition.

The protein resides in the secreted. It is found in the extracellular space. Its subcellular location is the extracellular matrix. In terms of biological role, ligand for members of the frizzled family of seven transmembrane receptors. Functions in the canonical Wnt signaling pathway that results in activation of transcription factors of the TCF/LEF family. Required for normal embryonic mesoderm development and formation of caudal somites. Required for normal morphogenesis of the developing neural tube. This chain is Protein Wnt-3a (WNT-3A), found in Pituophis melanoleucus (Pine snake).